Here is a 1763-residue protein sequence, read N- to C-terminus: Genome polyprotein (1763 aa).

Residues 458–614 form the SF3 helicase domain; the sequence is DGVITSCNKR…ESHKRARPGT (157 aa). An ATP-binding site is contributed by 484–491; it reads GPPGCGKT. The residue at position 984 (Tyr984) is an O-(5'-phospho-RNA)-tyrosine. Thr1040 carries the phosphothreonine modification. Ser1067 is modified (phosphoserine). The region spanning 1073–1229 is the Peptidase C24 domain; that stretch reads GPGTKFHKNA…KLVVPYVHID (157 aa). Active-site for 3CLpro activity residues include His1110, Glu1131, and Cys1193. Residues 1478 to 1603 form the RdRp catalytic domain; sequence AKVYAVDYSK…MFPMMFASVS (126 aa).

Homodimer. Interacts with NTPase, protein p30 and protease-polymerase p76. In terms of assembly, interacts with capsid protein VP1 and protease-polymerase p76. Interacts with host IEF4e; this interaction plays a role in translation of viral proteins. As to quaternary structure, homooligomer. Interacts with Vpg, protein p32 and may interact with capsid protein VP1. In terms of processing, specific enzymatic cleavages in vivo yield mature proteins. Pro-Pol is first autocatalytically cleaved, then processes the whole polyprotein. VPg is uridylylated by the polymerase and is covalently attached to the 5'-end of the polyadenylated genomic and subgenomic RNAs. This uridylylated form acts as a nucleotide-peptide primer for the polymerase.

Its subcellular location is the host endoplasmic reticulum membrane. It carries out the reaction a ribonucleoside 5'-triphosphate + H2O = a ribonucleoside 5'-diphosphate + phosphate + H(+). It catalyses the reaction RNA(n) + a ribonucleoside 5'-triphosphate = RNA(n+1) + diphosphate. The enzyme catalyses Endopeptidase with a preference for cleavage when the P1 position is occupied by Glu-|-Xaa and the P1' position is occupied by Gly-|-Yaa.. Its function is as follows. Together with NTPase and NS4, initiates the formation of the replication complex. Induces the proliferation of the host smooth ER membranes forming long tubular structures. These remodeled membranes probably form the viral factories that contain the replication complex. In terms of biological role, displays NTPase activity, but no helicase activity. Induces the formation of convoluted membranes derived from the host ER. These remodeled membranes probably form the viral factories that contain the replication complex. Together with NS2 and NS4, initiates the formation of the replication complex. Probable key protein responsible for the formation of membrane alterations by the virus. Induces the formation of convoluted membranes derived from the host ER. These remodeled membranes probably form the viral factories that contain the replication complex. Together with NS2 and NTPase, initiates the formation of the replication complex. Functionally, viral genome-linked protein is covalently linked to the 5'-end of the positive-strand, negative-strand genomic RNAs and subgenomic RNA. Acts as a genome-linked replication primer. May recruit ribosome to viral RNA thereby promoting viral proteins translation. Interacts with host translation initiation complex to allow the translation of viral proteins. Its function is as follows. Processes the polyprotein: Pro-Pol is first released by autocleavage, then all other proteins are cleaved. Cleaves host translation initiation factor eIF4G1, eIF4G2 and PABP1 thereby inducing a shutdown of host protein synthesis. This shutdown may not prevent viral mRNA from being translated since viral Vpg replaces the cap. Also functions as an RNA-directed RNA polymerase, which replicates genomic and antigenomic viral RNA by recognizing specific signals. Transcribes a subgenomic mRNA by initiating RNA synthesis internally on antigenomic RNA. This sgRNA codes for structural proteins. Catalyzes the covalent attachment VPg with viral RNAs. Cleaves host G3BP1 thereby preventing the assembly of host stress granules. In Feline calicivirus (strain Cat/United States/Urbana/1960) (FCV), this protein is Genome polyprotein.